The sequence spans 265 residues: Thiazole synthase (265 aa).

The active-site Schiff-base intermediate with DXP is the Lys-106. 1-deoxy-D-xylulose 5-phosphate is bound by residues Gly-167, 193–194 (AG), and 215–216 (NS).

Belongs to the ThiG family. Homotetramer. Forms heterodimers with either ThiH or ThiS.

It localises to the cytoplasm. The enzyme catalyses [ThiS sulfur-carrier protein]-C-terminal-Gly-aminoethanethioate + 2-iminoacetate + 1-deoxy-D-xylulose 5-phosphate = [ThiS sulfur-carrier protein]-C-terminal Gly-Gly + 2-[(2R,5Z)-2-carboxy-4-methylthiazol-5(2H)-ylidene]ethyl phosphate + 2 H2O + H(+). It functions in the pathway cofactor biosynthesis; thiamine diphosphate biosynthesis. Catalyzes the rearrangement of 1-deoxy-D-xylulose 5-phosphate (DXP) to produce the thiazole phosphate moiety of thiamine. Sulfur is provided by the thiocarboxylate moiety of the carrier protein ThiS. In vitro, sulfur can be provided by H(2)S. This chain is Thiazole synthase, found in Prochlorococcus marinus (strain MIT 9515).